An 81-amino-acid chain; its full sequence is Anaphase-promoting complex subunit emb-1 (81 aa).

The APC/C is probably composed of at least 12 subunits: apc-2, apc-10, apc-11, cdc-26, emb-1, emb-27, emb-30, mat-1, mat-2, mat-3, such-1 and gfi-3. As to expression, expressed in germ cells.

It functions in the pathway protein modification; protein ubiquitination. Its function is as follows. Probable component of the anaphase promoting complex/cyclosome (APC/C), a cell cycle-regulated E3 ubiquitin ligase that controls progression through mitosis and the G1 phase of the cell cycle. The APC/C complex acts by mediating ubiquitination and subsequent degradation of target proteins. Developmental role in early embryogenesis and the metaphase to anaphase transition in meiosis and mitosis. May be required for germline proliferation. Required for male tail development and hermaphrodite vulva formation. The polypeptide is Anaphase-promoting complex subunit emb-1 (Caenorhabditis elegans).